We begin with the raw amino-acid sequence, 295 residues long: MTSTDPSQASADRYVVIGNPVAHSRSPSIHAAFARQTGEAVHYDRLEAPLDGFADTVRRFFADGGYGCNVTVPFKLEAYDLADRLTERAEAAGAVNTLWIEEGLIHGDNTDGIGLVRDIQDNLDTLIEGKRVLLLGAGGAAMGAMLPLIECRPSRIVVANRTASRASDMLEAFVEAADQYGVELWGGGLDALEGLSEDEAVDVVINASSSSLQGEVPPVPEFLLGEGVLAYDMMYGAEPTVFLQFAARCGARVSDGLGMLVEQAAEAFYIWRGVRPRTAPVLAELRAALQAERKV.

Shikimate contacts are provided by residues serine 24–serine 26 and threonine 71. Lysine 75 acts as the Proton acceptor in catalysis. Position 87 (glutamate 87) interacts with NADP(+). 2 residues coordinate shikimate: asparagine 96 and aspartate 111. NADP(+)-binding positions include glycine 136–alanine 140, asparagine 160–arginine 165, and methionine 233. Shikimate is bound at residue tyrosine 235. Position 256 (glycine 256) interacts with NADP(+).

It belongs to the shikimate dehydrogenase family. As to quaternary structure, homodimer.

The catalysed reaction is shikimate + NADP(+) = 3-dehydroshikimate + NADPH + H(+). Its pathway is metabolic intermediate biosynthesis; chorismate biosynthesis; chorismate from D-erythrose 4-phosphate and phosphoenolpyruvate: step 4/7. Involved in the biosynthesis of the chorismate, which leads to the biosynthesis of aromatic amino acids. Catalyzes the reversible NADPH linked reduction of 3-dehydroshikimate (DHSA) to yield shikimate (SA). This Cupriavidus taiwanensis (strain DSM 17343 / BCRC 17206 / CCUG 44338 / CIP 107171 / LMG 19424 / R1) (Ralstonia taiwanensis (strain LMG 19424)) protein is Shikimate dehydrogenase (NADP(+)).